Here is a 257-residue protein sequence, read N- to C-terminus: Enterotoxin type A (257 aa).

The N-terminal stretch at 1–27 (MKKTAFILLLFIALTWTTSPLVNGSEK) is a signal peptide. The cysteines at positions 120 and 130 are disulfide-linked. Zn(2+)-binding residues include histidine 211, histidine 249, and aspartate 251.

The protein belongs to the staphylococcal/streptococcal toxin family. In terms of assembly, monomer. Interacts with MHC class II molecules alpha/HLA-DRB1 and beta/HLA-DRA chains. The interaction with MHC-II molecules occurs at both zinc-dependent and zinc-independent sites. Interacts with T-cell receptor beta variable 7-9/TRBV7-9. The cofactor is Zn(2+).

It is found in the secreted. Staphylococcal enterotoxin that activates the host immune system by binding as unprocessed molecules to major histocompatibility (MHC) complex class II and T-cell receptor (TCR) molecules. In turn, waves of cellular activation, cytokine production, and migration into the lung tissue and airways occur via alphabeta T-cells. Also causes the intoxication staphylococcal food poisoning syndrome. The illness is characterized by high fever, hypotension, diarrhea, shock, and in some cases death. The sequence is that of Enterotoxin type A (sea) from Staphylococcus aureus (strain Newman).